A 283-amino-acid polypeptide reads, in one-letter code: Pantothenate synthetase (283 aa).

30–37 (MGALHEGH) lines the ATP pocket. Catalysis depends on histidine 37, which acts as the Proton donor. Glutamine 61 is a (R)-pantoate binding site. Beta-alanine is bound at residue glutamine 61. 147–150 (GEKD) serves as a coordination point for ATP. (R)-pantoate is bound at residue glutamine 153. ATP is bound by residues isoleucine 176 and 184-187 (VSSR).

The protein belongs to the pantothenate synthetase family. In terms of assembly, homodimer.

The protein localises to the cytoplasm. It carries out the reaction (R)-pantoate + beta-alanine + ATP = (R)-pantothenate + AMP + diphosphate + H(+). Its pathway is cofactor biosynthesis; (R)-pantothenate biosynthesis; (R)-pantothenate from (R)-pantoate and beta-alanine: step 1/1. Catalyzes the condensation of pantoate with beta-alanine in an ATP-dependent reaction via a pantoyl-adenylate intermediate. This chain is Pantothenate synthetase, found in Pelodictyon phaeoclathratiforme (strain DSM 5477 / BU-1).